The chain runs to 413 residues: Eukaryotic initiation factor 4A-11 (413 aa).

The Q motif signature appears at 40–68 (ESFDAMGLQENLLRGIYAYGFEKPSAIQQ). One can recognise a Helicase ATP-binding domain in the interval 71–241 (IVPFCKGLDV…RKFMNKPVRI (171 aa)). 84–91 (AQSGTGKT) is an ATP binding site. The short motif at 189-192 (DEAD) is the DEAD box element. Positions 252–413 (GIKQFYVNVD…ELPANVADLL (162 aa)) constitute a Helicase C-terminal domain.

The protein belongs to the DEAD box helicase family. eIF4A subfamily. In terms of assembly, eIF4F is a multi-subunit complex, the composition of which varies with external and internal environmental conditions. It is composed of at least EIF4A, EIF4E and EIF4G.

It catalyses the reaction ATP + H2O = ADP + phosphate + H(+). In terms of biological role, ATP-dependent RNA helicase which is a subunit of the eIF4F complex involved in cap recognition and is required for mRNA binding to ribosome. In the current model of translation initiation, eIF4A unwinds RNA secondary structures in the 5'-UTR of mRNAs which is necessary to allow efficient binding of the small ribosomal subunit, and subsequent scanning for the initiator codon. The protein is Eukaryotic initiation factor 4A-11 of Nicotiana tabacum (Common tobacco).